The chain runs to 3790 residues: Transcription-associated protein 1 (3790 aa).

HEAT repeat units follow at residues 98 to 136, 335 to 381, 740 to 778, 1185 to 1223, 1332 to 1370, and 1826 to 1864; these read RQHV…HFRP, TDLR…HVRQ, DLLY…ELCL, AKAT…IQSK, IGYK…GVTL, and AIHK…AMPL. The 564-residue stretch at 2610–3173 folds into the FAT domain; that stretch reads LLAYLGKSHN…YFPIRTLYLT (564 aa). Residues 3429-3753 form the PI3K/PI4K catalytic domain; the sequence is MPRVEIVQKN…AVDIIMTRFN (325 aa). The interval 3435-3441 is G-loop; sequence VQKNNTA. The catalytic loop stretch occupies residues 3616-3624; the sequence is NLTRLNADM. The segment at 3636-3661 is activation loop; that stretch reads ISYFKFDVNDDKCQLNQHRPVPFRLT. One can recognise an FATC domain in the interval 3758–3790; sequence FDSIENKKISVLVQSATNIDNLCRMDPAWHPWL.

The protein belongs to the PI3/PI4-kinase family. TRA1 subfamily. As to quaternary structure, component of the Tip60 chromatin-remodeling complex which contains the catalytic subunit Tip60 and the subunits Domino, Tra1, Brd8, E(Pc), DMAP1, Pontin, Reptin, Ing3, Act87E, BAP55, Mrg15, MrgBP, Gas41 and YL-1. Probable component of some SAGA complex. Interacts with Spt3, Gcn5, Ada3 and Ada2b. As to expression, ubiquitous.

It localises to the nucleus. Its subcellular location is the cytoplasm. The protein localises to the chromosome. Functionally, part of the Tip60 chromatin-remodeling complex which is involved in DNA repair. Upon induction of DNA double-strand breaks, this complex acetylates phosphorylated H2AV in nucleosomes and exchanges it with unmodified H2AV. During wing development, required for activity of Notch and its coactivator mam. Function in promoting mam function is likely to involve both the Tip60 and SAGA complexes. The chain is Transcription-associated protein 1 (Nipped-A) from Drosophila melanogaster (Fruit fly).